We begin with the raw amino-acid sequence, 526 residues long: Na(+)/H(+) antiporter NhaB (526 aa).

Helical transmembrane passes span 25-45 (ILLF…AAGW), 52-72 (IFTL…LLAI), 89-109 (LVAN…IYFM), 130-164 (LSLA…FYAI), 204-224 (LMMH…VGEP), 242-262 (IRMA…CILV), 305-325 (AVIA…VGLI), 350-370 (QEAL…AVII), 391-411 (LALF…VFVG), 448-468 (VATP…LAPL), 479-499 (MALP…ELLL), and 505-525 (WFYQ…LPAL).

This sequence belongs to the NhaB Na(+)/H(+) (TC 2.A.34) antiporter family.

Its subcellular location is the cell inner membrane. The enzyme catalyses 2 Na(+)(in) + 3 H(+)(out) = 2 Na(+)(out) + 3 H(+)(in). In terms of biological role, na(+)/H(+) antiporter that extrudes sodium in exchange for external protons. In Aeromonas salmonicida (strain A449), this protein is Na(+)/H(+) antiporter NhaB.